A 302-amino-acid polypeptide reads, in one-letter code: Protein TILLER ANGLE CONTROL 1 (302 aa).

An IGT motif motif is present at residues 57 to 63; it reads GILTIGT. Disordered regions lie at residues 82 to 115 and 159 to 180; these read ESEE…VEDE and EGSS…KNKK. A compositionally biased stretch (acidic residues) spans 99–115; that stretch reads DDDDDDDEHYDHSVEDE. Positions 162-175 are enriched in polar residues; the sequence is SEISTKPDQSANDQ.

The protein belongs to the TAC family. Highly expressed in flower buds. Expressed in branch attachment sites, vegetative buds and young fruits.

In terms of biological role, involved in the regulation of axillary shoot growth angle. Promotes horizontal shoot growth. The sequence is that of Protein TILLER ANGLE CONTROL 1 from Prunus persica (Peach).